The chain runs to 326 residues: Glycerol-3-phosphate dehydrogenase [NAD(P)+] (326 aa).

Positions 16, 36, 37, and 106 each coordinate NADPH. Sn-glycerol 3-phosphate contacts are provided by Lys106 and Gly132. Residue Ala136 participates in NADPH binding. The sn-glycerol 3-phosphate site is built by Lys187, Asp240, Ser250, Arg251, and Asn252. Lys187 (proton acceptor) is an active-site residue. An NADPH-binding site is contributed by Arg251. Val271 and Glu273 together coordinate NADPH.

This sequence belongs to the NAD-dependent glycerol-3-phosphate dehydrogenase family.

It localises to the cytoplasm. It carries out the reaction sn-glycerol 3-phosphate + NAD(+) = dihydroxyacetone phosphate + NADH + H(+). The catalysed reaction is sn-glycerol 3-phosphate + NADP(+) = dihydroxyacetone phosphate + NADPH + H(+). It participates in membrane lipid metabolism; glycerophospholipid metabolism. Functionally, catalyzes the reduction of the glycolytic intermediate dihydroxyacetone phosphate (DHAP) to sn-glycerol 3-phosphate (G3P), the key precursor for phospholipid synthesis. This Deinococcus geothermalis (strain DSM 11300 / CIP 105573 / AG-3a) protein is Glycerol-3-phosphate dehydrogenase [NAD(P)+].